The primary structure comprises 164 residues: Kunitz-type trypsin inhibitor BrTI (164 aa).

It belongs to the leguminous Kunitz-type inhibitor family.

Its function is as follows. Inhibitor of trypsin and human plasma kallikrein with a Ki of 2.9 nM and 14.0 nM, respectively. Does not inhibit chymotrypsin, porcine pancreatic elastas, human neutrophil elastase, coagulation factor Xa, human thrombin, porcine pancreatic kallikrein or plasmin. This is Kunitz-type trypsin inhibitor BrTI from Bauhinia rufa (Orchid tree).